A 655-amino-acid polypeptide reads, in one-letter code: UvrABC system protein B (655 aa).

The Helicase ATP-binding domain maps to 25–181 (DGINKGEKEQ…IRKLVFMQYE (157 aa)). Residue 38–45 (GVTGSGKT) coordinates ATP. The Beta-hairpin motif lies at 91–114 (YYDYYQPEAYVPRTDTFIDKESSV). Residues 428–590 (QVEDLLGEVK…IVPKTTKRAL (163 aa)) enclose the Helicase C-terminal domain. In terms of domain architecture, UVR spans 615 to 650 (RLLISDLENDMKEAAAKLDFERAASLRDQIATLKGL).

This sequence belongs to the UvrB family. As to quaternary structure, forms a heterotetramer with UvrA during the search for lesions. Interacts with UvrC in an incision complex.

The protein resides in the cytoplasm. Its function is as follows. The UvrABC repair system catalyzes the recognition and processing of DNA lesions. A damage recognition complex composed of 2 UvrA and 2 UvrB subunits scans DNA for abnormalities. Upon binding of the UvrA(2)B(2) complex to a putative damaged site, the DNA wraps around one UvrB monomer. DNA wrap is dependent on ATP binding by UvrB and probably causes local melting of the DNA helix, facilitating insertion of UvrB beta-hairpin between the DNA strands. Then UvrB probes one DNA strand for the presence of a lesion. If a lesion is found the UvrA subunits dissociate and the UvrB-DNA preincision complex is formed. This complex is subsequently bound by UvrC and the second UvrB is released. If no lesion is found, the DNA wraps around the other UvrB subunit that will check the other stand for damage. This Methanobrevibacter smithii (strain ATCC 35061 / DSM 861 / OCM 144 / PS) protein is UvrABC system protein B.